The following is a 305-amino-acid chain: Hydrogen peroxide-inducible genes activator (305 aa).

One can recognise an HTH lysR-type domain in the interval 1–58 (MNIRDLEYLVALAEHRHFRRAADSCHVSQPTLSGQIRKLEDELGVMLLERTSRKVLFT). The H-T-H motif DNA-binding region spans 18–37 (FRRAADSCHVSQPTLSGQIR). Intrachain disulfides connect Cys-180–Cys-259 and Cys-199–Cys-208. Cys-199 is modified (cysteine sulfenic acid (-SOH); alternate). Cys-199 carries the S-glutathionyl cysteine; alternate modification. Cys-199 is modified (S-nitrosocysteine; alternate).

It belongs to the LysR transcriptional regulatory family. Homodimer and homotetramer. In terms of processing, oxidized on Cys-199; the Cys-SOH formed in response to oxidative signaling triggers a conformational change and the onset of transcriptional activity with a specific DNA-binding affinity. Cys-199-SOH rapidly reacts with Cys-208-SH to form a disulfide bond. Post-translationally, S-nitrosylation in response to nitrosative signaling triggers a conformational change and the onset of transcriptional activity with a specific DNA-binding affinity. Glutathionylation in response to redox signaling triggers the onset of transcriptional activity with a specific DNA-binding affinity.

Activated by oxidation of Cys-199 resulting in the alternative formation of cystine, sulfenic acid, S-nitroso- or glutathione-bound cysteine. Functionally, hydrogen peroxide sensor. Activates the expression of a regulon of hydrogen peroxide-inducible genes such as katG, gor, ahpC, ahpF, oxyS (a regulatory RNA), dps, fur and grxA. OxyR expression is negatively autoregulated by binding to a 43 bp region upstream of its own coding sequence. OxyR is inactivated by reduction of its essential disulfide bond by the product of GrxA, itself positively regulated by OxyR. Also has a positive regulatory effect on the production of surface proteins that control the colony morphology and auto-aggregation ability. This Escherichia coli O157:H7 protein is Hydrogen peroxide-inducible genes activator (oxyR).